A 1349-amino-acid chain; its full sequence is Patatin-like phospholipase domain-containing protein 7 (1349 aa).

At 1 to 36 (MQKEEDVCPEAGYCLGTALSSWGLHFMEEHSQSTML) the chain is on the lumenal side. The chain crosses the membrane as a helical span at residues 37 to 57 (MGIGIGVLLTLAFVGLAAFFV). Residues 58-1349 (YRKVSRFRRA…DQGPRLYRPS (1292 aa)) are Cytoplasmic-facing. 170-297 (VLGHFEKPLF…VRVVQIIMVR (128 aa)) lines the a nucleoside 3',5'-cyclic phosphate pocket. The tract at residues 340 to 361 (MSYGPEEQLERSPRLSEFNSSD) is disordered. Phosphoserine occurs at positions 341 and 377. A nucleoside 3',5'-cyclic phosphate-binding positions include 496–599 (FLHV…VVRR) and 610–715 (ALDW…LGEK). An involved in the binding to lipid droplets region spans residues 678-964 (VHAVRDSELA…RGCAQVGILR (287 aa)). The PNPLA domain maps to 947 to 1113 (LVLGGGGARG…INNLPADVAR (167 aa)). A GXGXXG motif is present at residues 951-956 (GGGARG). Residues 978 to 982 (GTSIG) carry the GXSXG motif. The active-site Nucleophile is the serine 980. Catalysis depends on aspartate 1100, which acts as the Proton acceptor. Residues 1100–1102 (DGG) carry the DGA/G motif. At serine 1277 the chain carries Phosphoserine. Threonine 1281 is modified (phosphothreonine). The tract at residues 1297-1349 (DFQSTGIELDSDSECEPSMSQGPHSLTSPKQSQDSFPWLPNQDDQGPRLYRPS) is disordered. Over residues 1314-1331 (SMSQGPHSLTSPKQSQDS) the composition is skewed to polar residues.

Belongs to the NTE family. In terms of tissue distribution, expressed in the brain, liver, kidney, lung and testis.

Its subcellular location is the endoplasmic reticulum membrane. It is found in the lipid droplet. It catalyses the reaction a 1-acyl-sn-glycero-3-phosphocholine + H2O = sn-glycerol 3-phosphocholine + a fatty acid + H(+). It carries out the reaction 1-(9Z-octadecenoyl)-sn-glycero-3-phosphocholine + H2O = sn-glycerol 3-phosphocholine + (9Z)-octadecenoate + H(+). The enzyme catalyses 1-(9Z-octadecenoyl)-sn-glycero-3-phosphoethanolamine + H2O = sn-glycero-3-phosphoethanolamine + (9Z)-octadecenoate + H(+). The catalysed reaction is 1-(9Z-octadecenoyl)-sn-glycero-3-phospho-L-serine + H2O = sn-glycero-3-phospho-L-serine + (9Z)-octadecenoate + H(+). It catalyses the reaction 1-hexadecanoyl-sn-glycero-3-phosphocholine + H2O = sn-glycerol 3-phosphocholine + hexadecanoate + H(+). It carries out the reaction 1-hexadecanoyl-sn-glycero-3-phosphate + H2O = sn-glycerol 3-phosphate + hexadecanoate + H(+). In terms of biological role, lysophospholipase which preferentially deacylates unsaturated lysophosphatidylcholine (C18:1), generating glycerophosphocholine. Also can deacylate, to a lesser extent, lysophosphatidylethanolamine (C18:1), lysophosphatidyl-L-serine (C18:1) and lysophosphatidic acid (C16:0). The chain is Patatin-like phospholipase domain-containing protein 7 (Pnpla7) from Rattus norvegicus (Rat).